The primary structure comprises 2798 residues: MVRDLAAVRRTPARASTSSSASEVGNDENAPVDASDAAVVEPEAAAARPPLLAIQPPQSGLKRKPESPAPTPSKLPFRTPEKAAARSRFGWVPPRGEEQPPPRVGGTPYSAVSTPGRHRGKSSAAAASEGGGGSTQSTPTKSVTKPAYSIGMSASRPPMSSGQRGAGLGLGFSMAARGTPMSFAPVTVVNTAEVPHFELREDPSFWMENNVQVVIRVRPLNNTERNLHNYNRCLKQESAQSITWIGQPESRFTFDHVACEAVNQEVLFRVAGLPMVENCMAGYNSCIFAYGQTGSGKTYTMLGEISELEVRPSQDRGMTPRIFEFLFARIRAEEESRRDEKLKYNCKCSFLEIYNEQITDLLDPSSTNLPLREDIRNGVYVENLTELEVGCVSDIIKLLMQGSANRKVAATNMNRESSRSHSVFTCIIESRWEKDSASNLRFARLNLVDLAGSERQRTSGAAGERLKEAANINKSLSTLGLVIMSLVDQAHGKQRHVPYRDSRLTFLLQDSLGGNSKTMIIANVSPSVCSASETLSTLKFAQRARLIQNNAVVNEDASGDVLALQHQIRLLKEELAVLKRQRVPRSLSFTSDIFERSGVDVDDGTESMNMDEENDNDAHDRRSLQDLRISNKQLRLLEETLAGAFRRESVAEATVKQLEAEIEQLNRMVYERENDTRSAKMTLKFREDKIHQMEALVRDKLPAESYLLEENNTLLKEIDLLRAKIDKNPEVTRFALENIRLSNKLKSYNQFCNEGEREHLLNEVSILRNQVLQILERRAEAEQPNNFPTNFELKRTSQELETCRGELQACLEANKKLAREIADLQNELSNIHSSNREGHPNVVEKFSSALNQYDSHAPEKKDQCFQEGFMINTDDILNLQLELDIIKTILAEERTTRAEVEKRITCLDDELKAANIHILQTCRQSETMQRELSDARSVIEALESQQIMLINELDELKESNQQSLEHLKKRDLEISRLNNELDVHRRQEFLAMEEPKVQLLKCFENDDSPLQTKLKRMQASLEKARKLNTRYQRDQASHSSAQQEMDEVSRQVEVETAEVIMCLQEELISLQQQLDASSKNELLANQRIDEARLEREQLNDRLLEVMKENECFSALIEEKDKKIGMLTNDWDKLASDIGNFLLDGNAALDEASDQVAFISESISQRKWIEDQVQKMCRGISQRDELLKELQSRLKEADDIRCDLDLKLRSLRGAMQAINDTHQQEKNDQENAMSVLRSQESNERYVNQQQLQELQRIQLLLDESIESFVQKEVIEQSYISLQRAMEEVIHHLESQLDQSKRDLTQLLSETQDKEQAFERLKNEENGVLLTVLSDVLKAKGVIHEFETGFNAIQSSFSVDPEEVVCQNSDLNLEDRVGCDPTGAFEAGEKHNGDVLCKLSKEMECVVYTMQMLQSQMVKLLQEKENAKEYHFQSQRTIKDVSAKVLQLKSEIIDKEKGYEARLKELEIKMQEKEKDTAESFISWNKEREALELEVSEAKSLAIQKSFEASTLISKFEEAQATISDADTTVNALVEANEKAKLQIQNFKENEALFLSEKERLLTEISSLKMLLDVKDQTYEVMEKKFAASLLEANDLALELEDGIRHLQNLLLEKLEFVSSDVEWMKSKLQQFAELARTWLEENWLEIIGKDCAVSVLHLCHMGILLERITGLNAENGFLQRGLCESNSLISKLREHNDRAKNELEMCSVLKGKLLLDINHNFSRIAKKEQEATELNSRLDAFEKKILHLQAQEEAMLARSNSMYNELSILVEEIDATNKSALATESKEKEELRHQLDEALLCNAMLKDIIQEDVDLPQVNNYMKGCSEFELCNRLADYHNELVTTNIIAKDIESFVLSSELVQQKAQLQKQELMFIDALDGLTTEATLSRVDKDLGSAVIFSLLDDSNKIMIDFDNLKQNKDELMENLHVLSEENLNLRSVVGSLESSIESLQTELDGKTKALMELQYSHTTILEEFKLKSKATELGVSRENDLRSENNLLKHEYLDIVRKEQMMAELVANLDSEKLFVTIQGRLEQVADQVQMYTSDQLNMVTKVSNEIDFIQMSIEGLITHNGFLQSELIRKDELAKGLSFDLSLLQESASVAKDQADELIQLTEAIESLEPELDSKSNELVDAVSGRQLLEAQILKSNQKVSALEEQLASKINELKEVSVEKDELTSKLNHIEGISYTMEDELADKSKAIERLEEELIELRSLLDARTCFLQNLQNDFSKLLDEKKYCETQVLILNEKLEMAQALAEESEAIATEAKQMAEERKTHAEEKDEEVKLLERSIEELETTVCALENKVDIIKEEAERQRMHREEIELELQKVRQQMLAVPSSGQATSSLEGGMGDFTDSSRHSREIKNELLAAQENIRILQKDVAEKETEIAQCKAHISELNIHAEAAAREYKQKFMELEAMAQQVKSDNTSANACSTRPEKISLKPRGSGSPFKCIGLGFVQQMNSEKDEELSAAKQRIMELEGIAASRQREIFMLNARLATTESMTHDVIRDMLGVKMNMATWAALVDNQQQMDTQESAVTQAHESKEQSDELMKLRSQLDELIEERQSWLDEINQRQSELGAARITIEKLRQKEHFMVAEIELLKAENANGKAIIFNLEDEVKKLTRQQNLQLRINHHEENNLLKKQNEELSAKLQKLGAVVARTKEELARYRVSDGKDPYEQMEEEELLRNRLEESEQDRSKLAENLSSLCATVLKIAGVRNHESDASLLKALEALNQIQLRIASMEAGVEDLKLKCKLLHEKARLSELRSESSSLSSGRSRSPSVCRSPSISSFR.

The segment at 1-165 is disordered; it reads MVRDLAAVRR…RPPMSSGQRG (165 aa). 2 stretches are compositionally biased toward low complexity: residues 8–22 and 31–58; these read VRRT…SSAS and PVDA…QPPQ. The region spanning 210–547 is the Kinesin motor domain; it reads NVQVVIRVRP…LKFAQRARLI (338 aa). 291–298 serves as a coordination point for ATP; the sequence is GQTGSGKT. A compositionally biased stretch (acidic residues) spans 600-615; it reads DVDDGTESMNMDEEND. A disordered region spans residues 600–621; sequence DVDDGTESMNMDEENDNDAHDR. Coiled coils occupy residues 792–835, 890–987, 1014–1108, 1281–1322, and 2130–2333; these read ELKR…HSSN, LAEE…HRRQ, LKRM…VMKE, QRAM…LKNE, and ELVD…VRQQ. Residues 2338–2359 are disordered; the sequence is PSSGQATSSLEGGMGDFTDSSR. 2 coiled-coil regions span residues 2361 to 2427 and 2545 to 2758; these read SREI…VKSD and ESKE…LKLK. The tract at residues 2772 to 2798 is disordered; that stretch reads RSESSSLSSGRSRSPSVCRSPSISSFR. The segment covering 2774–2798 has biased composition (low complexity); it reads ESSSLSSGRSRSPSVCRSPSISSFR.

The protein belongs to the TRAFAC class myosin-kinesin ATPase superfamily. Kinesin family. KIN-12 subfamily.

In Oryza sativa subsp. japonica (Rice), this protein is Kinesin-like protein KIN-12F.